The chain runs to 136 residues: Small ribosomal subunit protein uS11c (136 aa).

The segment at 1-22 is disordered; it reads MAKAIPKKGSRGRIGSRKSTRK.

This sequence belongs to the universal ribosomal protein uS11 family. Part of the 30S ribosomal subunit.

Its subcellular location is the plastid. The protein resides in the chloroplast. This Lactuca sativa (Garden lettuce) protein is Small ribosomal subunit protein uS11c.